The sequence spans 386 residues: 3-ketosteroid-9-alpha-monooxygenase, oxygenase component (386 aa).

Positions 26-128 (WHCLGVAKDY…TDVRSGLLFV (103 aa)) constitute a Rieske domain. [2Fe-2S] cluster-binding residues include Cys67, His69, Cys86, and His89. Asn175, His181, His186, and Asp304 together coordinate Fe cation.

As to quaternary structure, homotrimer. The two-component system 3-ketosteroid-9-alpha-monooxygenase is composed of an oxygenase component KshA and a reductase component KshB. [2Fe-2S] cluster is required as a cofactor. Fe cation serves as cofactor.

It carries out the reaction androsta-1,4-diene-3,17-dione + 2 reduced [2Fe-2S]-[ferredoxin] + O2 + 2 H(+) = 9alpha-hydroxyandrosta-1,4-diene-3,17-dione + 2 oxidized [2Fe-2S]-[ferredoxin] + H2O. The enzyme catalyses androst-4-ene-3,17-dione + NADH + O2 + H(+) = 9alpha-hydroxy-androst-4-ene-3,17-dione + NAD(+) + H2O. The catalysed reaction is 3-oxochol-4-en-22-oate + NADH + O2 + H(+) = 9alpha-hydroxy-3-oxochol-4-en-22-oate + NAD(+) + H2O. It catalyses the reaction 3-oxochola-1,4-dien-22-oate + NADH + O2 + H(+) = 9alpha-hydroxy-3-oxochola-1,4-dien-22-oate + NAD(+) + H2O. It carries out the reaction 3-oxochol-4-en-22-oyl-CoA + NADH + O2 + H(+) = 9alpha-hydroxy-3-oxochol-4-en-22-oyl-CoA + NAD(+) + H2O. The enzyme catalyses 3-oxochola-1,4-dien-22-oyl-CoA + NADH + O2 + H(+) = 9alpha-hydroxy-3-oxochola-1,4-dien-22-oyl-CoA + NAD(+) + H2O. Its pathway is lipid metabolism; steroid biosynthesis. Its function is as follows. Involved in the degradation of cholesterol. Catalyzes the introduction of a 9a-hydroxyl moiety into 1,4-androstadiene-3,17-dione (ADD) to yield the 9alpha-hydroxy-1,4-androstadiene-3,17-dione (9OHADD) intermediate which spontaneously form 3-hydroxy-9,10-seconandrost-1,3,5(10)-triene-9,17-dione (HSA) via the meta-cleavage of ring B with concomitant aromatization of ring A. KSH is also able to use 4-androstene-3,17-dione (AD), 3-oxo-23,24-bisnorcholesta-4-en-22-oate (4-BNC), 3-oxo-23,24-bisnorcholesta-1,4-dien-22-oate (1,4-BNC), 3-oxo-23,24-bisnorcholesta-4-en-22-oyl-coenzyme A thioester (4-BNC-CoA) and 3-oxo-23,24-bisnorcholesta-1,4-dien-22-oyl-coenzyme A thioester (1,4-BNC-CoA) as substrates. The sequence is that of 3-ketosteroid-9-alpha-monooxygenase, oxygenase component (kshA) from Mycobacterium tuberculosis (strain ATCC 25618 / H37Rv).